Here is a 156-residue protein sequence, read N- to C-terminus: Small ribosomal subunit protein uS7 (156 aa).

Belongs to the universal ribosomal protein uS7 family. As to quaternary structure, part of the 30S ribosomal subunit. Contacts proteins S9 and S11.

One of the primary rRNA binding proteins, it binds directly to 16S rRNA where it nucleates assembly of the head domain of the 30S subunit. Is located at the subunit interface close to the decoding center, probably blocks exit of the E-site tRNA. This chain is Small ribosomal subunit protein uS7, found in Bacillus mycoides (strain KBAB4) (Bacillus weihenstephanensis).